Here is a 240-residue protein sequence, read N- to C-terminus: Ubiquinone biosynthesis O-methyltransferase (240 aa).

Positions 44, 64, 85, and 129 each coordinate S-adenosyl-L-methionine.

It belongs to the methyltransferase superfamily. UbiG/COQ3 family.

The enzyme catalyses a 3-demethylubiquinol + S-adenosyl-L-methionine = a ubiquinol + S-adenosyl-L-homocysteine + H(+). The catalysed reaction is a 3-(all-trans-polyprenyl)benzene-1,2-diol + S-adenosyl-L-methionine = a 2-methoxy-6-(all-trans-polyprenyl)phenol + S-adenosyl-L-homocysteine + H(+). It participates in cofactor biosynthesis; ubiquinone biosynthesis. In terms of biological role, O-methyltransferase that catalyzes the 2 O-methylation steps in the ubiquinone biosynthetic pathway. The chain is Ubiquinone biosynthesis O-methyltransferase from Escherichia coli O127:H6 (strain E2348/69 / EPEC).